The primary structure comprises 282 residues: MTSADYASRQRAIIAELNVAPHFDVDADIARRVDFLAQYLRSSGLRTYVLGISGGVDSSTAGRLAQLAVEQLRAGGYDARFIAMRLPNGVQNDEADAQRALAFVRADETFTVDVKPAADAMLASLVASGHAFETPAQQDFVHGNIKARERMIAQYAVAGARRGIVIGTDHAAESLMGFFTKFGDGGADVLPLAGLSKRRVRAVARALGGDELIVMKVPTADLEELRPLRPDEHAYGVTYDEIDDFLEGKTVSDTVYETVLRFYDGSRHKRALPYTLFDWPTA.

51 to 58 (GISGGVDS) contributes to the ATP binding site. Aspartate 57 provides a ligand contact to Mg(2+). A deamido-NAD(+)-binding site is contributed by arginine 148. Threonine 168 lines the ATP pocket. Glutamate 173 provides a ligand contact to Mg(2+). Positions 181 and 188 each coordinate deamido-NAD(+). ATP contacts are provided by lysine 197 and threonine 219. 268 to 269 (HK) provides a ligand contact to deamido-NAD(+).

Belongs to the NAD synthetase family. Homodimer.

It carries out the reaction deamido-NAD(+) + NH4(+) + ATP = AMP + diphosphate + NAD(+) + H(+). Its pathway is cofactor biosynthesis; NAD(+) biosynthesis; NAD(+) from deamido-NAD(+) (ammonia route): step 1/1. Its function is as follows. Catalyzes the ATP-dependent amidation of deamido-NAD to form NAD. Uses ammonia as a nitrogen source. The chain is NH(3)-dependent NAD(+) synthetase from Burkholderia ambifaria (strain MC40-6).